We begin with the raw amino-acid sequence, 286 residues long: Aquaporin PIP1-1 (286 aa).

The interval 1 to 34 is disordered; the sequence is MEGKEEDVRLGANKFSERQPIGTAAQSDKGYKEP. Residues 1 to 54 are Cytoplasmic-facing; sequence MEGKEEDVRLGANKFSERQPIGTAAQSDKGYKEPPPAPLFEPGELTSWSFYRAG. The helical transmembrane segment at 55 to 75 threads the bilayer; it reads IAEFMATFLFLYITILTVMGV. Over 76–88 the chain is Extracellular; the sequence is VKSNSKCSTVGIQ. Residues 89–109 form a helical membrane-spanning segment; it reads GIAWAFGGMIFALVYCTAGIS. Residues 110–131 lie on the Cytoplasmic side of the membrane; sequence GGHINPAVTFGLFLARKLSLTR. The NPA 1 motif lies at 114-116; that stretch reads NPA. Residues 132–152 traverse the membrane as a helical segment; that stretch reads ALFYMVMQCLGAICGAGVVKG. Residues 153 to 174 are Extracellular-facing; the sequence is YQKGLYESNGGGANVVAPGYTK. The helical transmembrane segment at 175–195 threads the bilayer; sequence GDGLGAEIVGTFILVYTVFSA. Residues 196-208 are Cytoplasmic-facing; that stretch reads TDAKRNARDSHVP. The helical transmembrane segment at 209–229 threads the bilayer; the sequence is ILAPLPIGFAVFLVHLATIPI. The Extracellular segment spans residues 230–256; that stretch reads TGTGINPARSLGAAIIYNKKHAWDDHW. The NPA 2 signature appears at 235–237; it reads NPA. The chain crosses the membrane as a helical span at residues 257-277; that stretch reads IFWVGPFIGAALAAIYHQIVI. The Cytoplasmic portion of the chain corresponds to 278–286; it reads RAIPFKSRP.

Belongs to the MIP/aquaporin (TC 1.A.8) family. PIP (TC 1.A.8.11) subfamily. Expressed in leaves, roots, stems, flowers and fruits, with highest levels in roots.

It localises to the cell membrane. Water channel required to facilitate the transport of water across cell membrane; mercury-insensitive. Promotes primary root elongation and root hair formation. Contributes to the tolerance to multiple abiotic stresses including salt (NaCl), cold and water deprivation, by modulating cytosolic K(+)/Na(+) ratio, maintaining osmotic balance, and reducing membrane injury (e.g. oxidative injury). Also regulates the expression of abscisic acid (ABA)-responsive genes during dehydration and salt stresses. The polypeptide is Aquaporin PIP1-1 (Musa acuminata (Banana)).